Reading from the N-terminus, the 122-residue chain is Large ribosomal subunit protein uL14 (122 aa).

This sequence belongs to the universal ribosomal protein uL14 family. In terms of assembly, part of the 50S ribosomal subunit. Forms a cluster with proteins L3 and L19. In the 70S ribosome, L14 and L19 interact and together make contacts with the 16S rRNA in bridges B5 and B8.

In terms of biological role, binds to 23S rRNA. Forms part of two intersubunit bridges in the 70S ribosome. The sequence is that of Large ribosomal subunit protein uL14 from Burkholderia lata (strain ATCC 17760 / DSM 23089 / LMG 22485 / NCIMB 9086 / R18194 / 383).